A 369-amino-acid polypeptide reads, in one-letter code: Protein-glutamate methylesterase/protein-glutamine glutaminase (369 aa).

In terms of domain architecture, Response regulatory spans 6–122 (RAVVADDSHF…SMEMSRLKDQ (117 aa)). The residue at position 56 (D56) is a 4-aspartylphosphate. The tract at residues 136 to 178 (GATGSRSGTGSDSGTAPTTAGGSATDRRGTGGSSGQTTYVANP) is disordered. Positions 138–159 (TGSRSGTGSDSGTAPTTAGGSA) are enriched in low complexity. A CheB-type methylesterase domain is found at 173–367 (TYVANPTLVI…DGVIDTITTE (195 aa)). Residues S185, H212, and D309 contribute to the active site.

It belongs to the CheB family. Phosphorylated by CheA. Phosphorylation of the N-terminal regulatory domain activates the methylesterase activity.

It localises to the cytoplasm. It carries out the reaction [protein]-L-glutamate 5-O-methyl ester + H2O = L-glutamyl-[protein] + methanol + H(+). The catalysed reaction is L-glutaminyl-[protein] + H2O = L-glutamyl-[protein] + NH4(+). Involved in chemotaxis. Part of a chemotaxis signal transduction system that modulates chemotaxis in response to various stimuli. Catalyzes the demethylation of specific methylglutamate residues introduced into the chemoreceptors (methyl-accepting chemotaxis proteins or MCP) by CheR. Also mediates the irreversible deamidation of specific glutamine residues to glutamic acid. The polypeptide is Protein-glutamate methylesterase/protein-glutamine glutaminase (Haloarcula marismortui (strain ATCC 43049 / DSM 3752 / JCM 8966 / VKM B-1809) (Halobacterium marismortui)).